The following is a 396-amino-acid chain: Gap junction gamma-1 protein (396 aa).

Residues M1–K22 lie on the Cytoplasmic side of the membrane. A helical transmembrane segment spans residues I23–Y45. The Extracellular portion of the chain corresponds to D46–R75. A helical membrane pass occupies residues F76–A95. At I96 to K175 the chain is on the cytoplasmic side. Residues E145–R165 are disordered. Positions E147 to N156 are enriched in basic and acidic residues. A helical membrane pass occupies residues I176–L198. Over Y199–K228 the chain is Extracellular. A helical membrane pass occupies residues T229–W248. Topologically, residues E249–I396 are cytoplasmic. Residues N357–I396 form a disordered region. Residues G373–I396 show a composition bias toward low complexity.

This sequence belongs to the connexin family. Gamma-type subfamily. In terms of assembly, a connexon is composed of a hexamer of connexins. Interacts with CNST.

Its subcellular location is the cell membrane. The protein localises to the cell junction. It is found in the gap junction. Its function is as follows. One gap junction consists of a cluster of closely packed pairs of transmembrane channels, the connexons, through which materials of low MW diffuse from one cell to a neighboring cell. The sequence is that of Gap junction gamma-1 protein (GJC1) from Sus scrofa (Pig).